Consider the following 302-residue polypeptide: Ribosomal RNA small subunit methyltransferase A (302 aa).

The S-adenosyl-L-methionine site is built by Asn27, Leu29, Gly54, Glu75, Asp100, and Asn138.

The protein belongs to the class I-like SAM-binding methyltransferase superfamily. rRNA adenine N(6)-methyltransferase family. RsmA subfamily.

The protein localises to the cytoplasm. It carries out the reaction adenosine(1518)/adenosine(1519) in 16S rRNA + 4 S-adenosyl-L-methionine = N(6)-dimethyladenosine(1518)/N(6)-dimethyladenosine(1519) in 16S rRNA + 4 S-adenosyl-L-homocysteine + 4 H(+). Functionally, specifically dimethylates two adjacent adenosines (A1518 and A1519) in the loop of a conserved hairpin near the 3'-end of 16S rRNA in the 30S particle. May play a critical role in biogenesis of 30S subunits. The chain is Ribosomal RNA small subunit methyltransferase A from Natranaerobius thermophilus (strain ATCC BAA-1301 / DSM 18059 / JW/NM-WN-LF).